The following is a 140-amino-acid chain: 3-hydroxyacyl-[acyl-carrier-protein] dehydratase FabZ (140 aa).

The active site involves His47.

It belongs to the thioester dehydratase family. FabZ subfamily.

It is found in the cytoplasm. It catalyses the reaction a (3R)-hydroxyacyl-[ACP] = a (2E)-enoyl-[ACP] + H2O. In terms of biological role, involved in unsaturated fatty acids biosynthesis. Catalyzes the dehydration of short chain beta-hydroxyacyl-ACPs and long chain saturated and unsaturated beta-hydroxyacyl-ACPs. In Streptococcus pneumoniae serotype 2 (strain D39 / NCTC 7466), this protein is 3-hydroxyacyl-[acyl-carrier-protein] dehydratase FabZ.